A 938-amino-acid chain; its full sequence is MSDYKSTLNLPETGFPMRGDLAKREPGMLARWTDDDLYGIIRAAKKGKKTFILHDGPPYANGSIHIGHSVNKILKDIIVKSKGLTGYDSPYVPGWDCHGLPIELKVEQQYGKPGEKFTAAEFRSKCREYAAEQIDGQRKDFIRLGVLGDWSRPYLTMDFKTEANIIRALGKIIGNGHLHKGAKPVHWCVDCRSALAEAEVEYYDKTSPSIDVAFHAVDKAAVLAKFGVADVNGPVSLVIWTTTPWTLPANRAISLSPEFDYALVQVDGQALILAKDLVESVMKRVGATDYTILAAVQGSELELMRFKHPFLDFDVPAILGDHVTLDAGTGAVHTAGGHGPDDYTISQKYGLEIANPVGPDGAYLPGTYPSLDGINVFKANDIIVEMLRDSGALLHVEKMQHSYPCCWRHKSPIIFRATPQWFVSMDQKGLRAQSLKEIKGVQWIPDWGQARIESMVANRPDWCISRQRTWGVPMSLFVHKETHELHPRTLELMEEVAKRVEVDGIQAWWDLDSRDILGDDADSYEKVPDTLDVWFDSGSTHSSVVDVRPEFAGHAADMYLEGSDQHRGWFMSSLMISTAMKGKAPYRQVLTHGFTVDGQGRKMSKSIGNTVSPQDVMNKLGADILRLWVASTDYTGEMAVSDEILKRAADSYRRIRNTARFLLANLNGFDPAKDMVKPEEMVVLDRWAVGCAQAAQEDILKAYESYDFHEVVQRLMRFCSIEMGSFYLDIIKDRQYTAKADSVARRSCQTALFHIVEALVRWMAPIMSFTADEIWGYLPGDREKYVFTGEWYKGLFGLADDEAMNDGFWDELLKVRGEVNKVIEQARADKKVGGSLEAAVTLYADADLAAKLNALGDELRFVLLTSGANVADYAQAPADAWQSDLLKGLKVVLSKAEGEKCPRCWHYTSDVGKVAEHAEICGRCVSNVAGNGEQRKFA.

Residues 58 to 68 carry the 'HIGH' region motif; that stretch reads PYANGSIHIGH. Glutamate 561 provides a ligand contact to L-isoleucyl-5'-AMP. Residues 602–606 carry the 'KMSKS' region motif; the sequence is KMSKS. Lysine 605 is a binding site for ATP. Residues cysteine 901, cysteine 904, cysteine 921, and cysteine 924 each coordinate Zn(2+).

It belongs to the class-I aminoacyl-tRNA synthetase family. IleS type 1 subfamily. As to quaternary structure, monomer. It depends on Zn(2+) as a cofactor.

It localises to the cytoplasm. The enzyme catalyses tRNA(Ile) + L-isoleucine + ATP = L-isoleucyl-tRNA(Ile) + AMP + diphosphate. In terms of biological role, catalyzes the attachment of isoleucine to tRNA(Ile). As IleRS can inadvertently accommodate and process structurally similar amino acids such as valine, to avoid such errors it has two additional distinct tRNA(Ile)-dependent editing activities. One activity is designated as 'pretransfer' editing and involves the hydrolysis of activated Val-AMP. The other activity is designated 'posttransfer' editing and involves deacylation of mischarged Val-tRNA(Ile). In Klebsiella pneumoniae (strain 342), this protein is Isoleucine--tRNA ligase.